Here is an 870-residue protein sequence, read N- to C-terminus: DNA mismatch repair protein MutS (870 aa).

617–624 (GPNMAGKS) contributes to the ATP binding site.

This sequence belongs to the DNA mismatch repair MutS family.

Functionally, this protein is involved in the repair of mismatches in DNA. It is possible that it carries out the mismatch recognition step. This protein has a weak ATPase activity. The protein is DNA mismatch repair protein MutS of Phocaeicola vulgatus (strain ATCC 8482 / DSM 1447 / JCM 5826 / CCUG 4940 / NBRC 14291 / NCTC 11154) (Bacteroides vulgatus).